The primary structure comprises 261 residues: uncharacterized protein (261 aa).

The first 22 residues, 1-22, serve as a signal peptide directing secretion; that stretch reads MGYLKKVGMCISLLIVIIFVTS. A lipid anchor (N-palmitoyl cysteine) is attached at Cys23. Cys23 is lipidated: S-diacylglycerol cysteine.

It belongs to the staphylococcal tandem lipoprotein family.

Its subcellular location is the cell membrane. This is an uncharacterized protein from Staphylococcus aureus (strain bovine RF122 / ET3-1).